The primary structure comprises 286 residues: 4-diphosphocytidyl-2-C-methyl-D-erythritol kinase (286 aa).

The active site involves Lys13. 96 to 106 (PMGGGIGGGSS) contributes to the ATP binding site. The active site involves Asp138.

Belongs to the GHMP kinase family. IspE subfamily.

The catalysed reaction is 4-CDP-2-C-methyl-D-erythritol + ATP = 4-CDP-2-C-methyl-D-erythritol 2-phosphate + ADP + H(+). It participates in isoprenoid biosynthesis; isopentenyl diphosphate biosynthesis via DXP pathway; isopentenyl diphosphate from 1-deoxy-D-xylulose 5-phosphate: step 3/6. In terms of biological role, catalyzes the phosphorylation of the position 2 hydroxy group of 4-diphosphocytidyl-2C-methyl-D-erythritol. This Pseudoalteromonas atlantica (strain T6c / ATCC BAA-1087) protein is 4-diphosphocytidyl-2-C-methyl-D-erythritol kinase.